The chain runs to 427 residues: Enolase (427 aa).

Residue glutamine 163 participates in (2R)-2-phosphoglycerate binding. Glutamate 205 acts as the Proton donor in catalysis. 3 residues coordinate Mg(2+): aspartate 242, glutamate 285, and aspartate 312. Positions 337, 366, 367, and 388 each coordinate (2R)-2-phosphoglycerate. The active-site Proton acceptor is lysine 337.

This sequence belongs to the enolase family. It depends on Mg(2+) as a cofactor.

It is found in the cytoplasm. The protein localises to the secreted. Its subcellular location is the cell surface. The enzyme catalyses (2R)-2-phosphoglycerate = phosphoenolpyruvate + H2O. The protein operates within carbohydrate degradation; glycolysis; pyruvate from D-glyceraldehyde 3-phosphate: step 4/5. Catalyzes the reversible conversion of 2-phosphoglycerate (2-PG) into phosphoenolpyruvate (PEP). It is essential for the degradation of carbohydrates via glycolysis. This chain is Enolase, found in Methylocella silvestris (strain DSM 15510 / CIP 108128 / LMG 27833 / NCIMB 13906 / BL2).